Here is a 90-residue protein sequence, read N- to C-terminus: MATRQSVDEHLQQCMQAYDYAEEQLKIASKQEHYNDQEYSDAQMQLEDAVNALNKLWLSSNDQQREQLYRMRLQLQSLQNNMILQHPLDV.

Residues 36-82 adopt a coiled-coil conformation; it reads DQEYSDAQMQLEDAVNALNKLWLSSNDQQREQLYRMRLQLQSLQNNM.

This is an uncharacterized protein from Bacillus subtilis (strain 168).